We begin with the raw amino-acid sequence, 505 residues long: 2,3-bisphosphoglycerate-independent phosphoglycerate mutase (505 aa).

Residues Asp-13 and Ser-63 each coordinate Mn(2+). Ser-63 acts as the Phosphoserine intermediate in catalysis. Residues His-124, 153–154, Arg-183, Arg-189, 254–257, and Lys-330 contribute to the substrate site; these read RD and RADR. Positions 396, 400, 437, 438, and 456 each coordinate Mn(2+).

It belongs to the BPG-independent phosphoglycerate mutase family. In terms of assembly, monomer. It depends on Mn(2+) as a cofactor.

The catalysed reaction is (2R)-2-phosphoglycerate = (2R)-3-phosphoglycerate. Its pathway is carbohydrate degradation; glycolysis; pyruvate from D-glyceraldehyde 3-phosphate: step 3/5. Functionally, catalyzes the interconversion of 2-phosphoglycerate and 3-phosphoglycerate. The protein is 2,3-bisphosphoglycerate-independent phosphoglycerate mutase of Roseobacter denitrificans (strain ATCC 33942 / OCh 114) (Erythrobacter sp. (strain OCh 114)).